The sequence spans 957 residues: ERC protein 2 (957 aa).

Polar residues predominate over residues 1–13 (MYGSARTISNPEG). A disordered region spans residues 1 to 44 (MYGSARTISNPEGSPSRSPRLPRSPRLGHRRTSSGGGGGTGKTL). Positions 14 to 25 (SPSRSPRLPRSP) are enriched in low complexity. Phosphoserine is present on residues Ser-65 and Ser-666. Positions 140 to 917 (RQVRDSTMLD…RMKLMADNYD (778 aa)) form a coiled coil. Residues 760-957 (DQNKKVANLK…DQDDEEGIWA (198 aa)) form an involved in binding to RIMS1 region. A disordered region spans residues 918-957 (DDHHHYHHHHHHHHHRSPGRSQHSNHRPSPDQDDEEGIWA). Positions 922–943 (HYHHHHHHHHHRSPGRSQHSNH) are enriched in basic residues. The span at 948 to 957 (DQDDEEGIWA) shows a compositional bias: acidic residues.

In terms of assembly, interacts with BSN, ERC1, PPFIA1, PPFIA2, PPFIA3 and PPFIA4. Interacts through its C-terminus with the PDZ domain of RIMS1. Part of a complex consisting of ERC2, RIMS1 and UNC13A. As to expression, predominantly expressed in brain, including hippocampus, cortex, cerebellum, amygdala and olfactory bulb.

The protein localises to the cytoplasm. Its subcellular location is the synapse. It localises to the presynaptic active zone. The protein resides in the cytoskeleton. In terms of biological role, thought to be involved in the organization of the cytomatrix at the nerve terminals active zone (CAZ) which regulates neurotransmitter release. Seems to act together with BSN. May recruit liprin-alpha proteins to the CAZ. The chain is ERC protein 2 (Erc2) from Rattus norvegicus (Rat).